A 225-amino-acid chain; its full sequence is UPF0758 protein NMC1174 (225 aa).

In terms of domain architecture, MPN spans 102-224; sequence VLSDPDTVAD…VRSFRQLGLM (123 aa). Zn(2+) is bound by residues His-173, His-175, and Asp-186. The short motif at 173 to 186 is the JAMM motif element; sequence HNHPGGSPEPSQED.

It belongs to the UPF0758 family.

This is UPF0758 protein NMC1174 from Neisseria meningitidis serogroup C / serotype 2a (strain ATCC 700532 / DSM 15464 / FAM18).